Here is a 214-residue protein sequence, read N- to C-terminus: LOB domain-containing protein 7 (214 aa).

An LOB domain is found at 12–113; it reads TACAACKHQR…TELNLTRQQI (102 aa).

This sequence belongs to the LOB domain-containing protein family.

This chain is LOB domain-containing protein 7 (LBD7), found in Arabidopsis thaliana (Mouse-ear cress).